We begin with the raw amino-acid sequence, 366 residues long: Ribosomal RNA large subunit methyltransferase M (366 aa).

Residues S188, 221 to 224 (CPGG), D240, D260, and D277 contribute to the S-adenosyl-L-methionine site. Residue K306 is the Proton acceptor of the active site.

The protein belongs to the class I-like SAM-binding methyltransferase superfamily. RNA methyltransferase RlmE family. RlmM subfamily. Monomer.

It localises to the cytoplasm. It catalyses the reaction cytidine(2498) in 23S rRNA + S-adenosyl-L-methionine = 2'-O-methylcytidine(2498) in 23S rRNA + S-adenosyl-L-homocysteine + H(+). Functionally, catalyzes the 2'-O-methylation at nucleotide C2498 in 23S rRNA. The sequence is that of Ribosomal RNA large subunit methyltransferase M from Salmonella dublin (strain CT_02021853).